The chain runs to 305 residues: Probable alpha-L-glutamate ligase (305 aa).

In terms of domain architecture, ATP-grasp spans 119–301; the sequence is LQVLAAQHIP…IAGLIIDYLL (183 aa). Residues Lys155, 192–193, Asp201, and 225–227 each bind ATP; these read DF and RAN. Mg(2+)-binding residues include Asp262, Glu274, and Asn276. Residues Asp262, Glu274, and Asn276 each coordinate Mn(2+).

It belongs to the RimK family. It depends on Mg(2+) as a cofactor. Mn(2+) is required as a cofactor.

This Haemophilus ducreyi (strain 35000HP / ATCC 700724) protein is Probable alpha-L-glutamate ligase.